The chain runs to 72 residues: Large ribosomal subunit protein uL29 (72 aa).

It belongs to the universal ribosomal protein uL29 family.

The chain is Large ribosomal subunit protein uL29 from Caldicellulosiruptor saccharolyticus (strain ATCC 43494 / DSM 8903 / Tp8T 6331).